The sequence spans 429 residues: UPF0053 protein YugS (429 aa).

A run of 4 helical transmembrane segments spans residues 1–21 (MLIL…VFVA), 61–81 (ACQL…EPTF), 101–121 (IVTF…MGEL), and 133–153 (AVSL…YPFI). Residues 1–201 (MLILQLIAIF…YEKGEINQSE (201 aa)) enclose the CNNM transmembrane domain. CBS domains follow at residues 220–281 (MIPR…PIKL) and 284–341 (IMRP…IRDE).

The protein belongs to the UPF0053 family.

The protein resides in the cell membrane. The polypeptide is UPF0053 protein YugS (yugS) (Bacillus subtilis (strain 168)).